The primary structure comprises 439 residues: Glutamine synthetase (439 aa).

Residues 13-98 form the GS beta-grasp domain; that stretch reads ENVRFIRLQF…VICDVYTPDG (86 aa). One can recognise a GS catalytic domain in the interval 105-439; the sequence is PRYRLRRMME…NWELQRYLYL (335 aa). The Mg(2+) site is built by glutamate 128 and glutamate 130. ATP is bound at residue glutamate 180. Residues glutamate 185 and glutamate 192 each coordinate Mg(2+). Residues 236 to 237 and glycine 237 contribute to the L-glutamate site; that span reads NG. Histidine 241 lines the Mg(2+) pocket. Residues 243–245 and serine 245 each bind ATP; that span reads HMS. Positions 294, 300, and 312 each coordinate L-glutamate. ATP is bound by residues arginine 312, arginine 317, and lysine 324. Mg(2+) is bound at residue glutamate 329. Arginine 331 provides a ligand contact to L-glutamate.

It belongs to the glutamine synthetase family. As to quaternary structure, oligomer of 12 subunits arranged in the form of two hexagons. In its feedback-inhibited form, interacts with TnrA in order to block its DNA-binding activity. Mg(2+) serves as cofactor.

It localises to the cytoplasm. The catalysed reaction is L-glutamate + NH4(+) + ATP = L-glutamine + ADP + phosphate + H(+). Its activity is regulated as follows. Inhibited by glutamine. Glutamine synthetase (GS) is an unusual multitasking protein that functions as an enzyme, a transcription coregulator, and a chaperone in ammonium assimilation and in the regulation of genes involved in nitrogen metabolism. It catalyzes the ATP-dependent biosynthesis of glutamine from glutamate and ammonia. Feedback-inhibited GlnA also interacts with and regulates the activity of the transcriptional regulator TnrA. During nitrogen limitation, TnrA is in its DNA-binding active state and turns on the transcription of genes required for nitrogen assimilation. Under conditions of nitrogen excess, feedback-inhibited GlnA forms a stable complex with TnrA, which inhibits its DNA-binding activity. In contrast, feedback-inhibited GlnA acts as a chaperone to stabilize the DNA-binding activity of GlnR, which represses the transcription of nitrogen assimilation genes. This chain is Glutamine synthetase, found in Thermotoga maritima (strain ATCC 43589 / DSM 3109 / JCM 10099 / NBRC 100826 / MSB8).